A 206-amino-acid polypeptide reads, in one-letter code: Somatotropin (206 aa).

Residues 1–22 (MAGLHFFPALLALLMASLQTHQ) form the signal peptide. Disulfide bonds link Cys75-Cys179 and Cys196-Cys204.

The protein belongs to the somatotropin/prolactin family.

It is found in the secreted. Functionally, growth hormone plays an important role in growth control and is involved in the regulation of several anabolic processes. Implicated as an osmoregulatory substance important for seawater adaptation. The chain is Somatotropin (gh) from Protopterus annectens (African lungfish).